The primary structure comprises 970 residues: Protein translocase subunit SecA (970 aa).

ATP contacts are provided by residues Gln99, 117–121, and Asp631; that span reads GEGKT.

This sequence belongs to the SecA family. Monomer and homodimer. Part of the essential Sec protein translocation apparatus which comprises SecA, SecYEG and auxiliary proteins SecDF. Other proteins may also be involved.

The protein resides in the cell inner membrane. It localises to the cytoplasm. The enzyme catalyses ATP + H2O + cellular proteinSide 1 = ADP + phosphate + cellular proteinSide 2.. Part of the Sec protein translocase complex. Interacts with the SecYEG preprotein conducting channel. Has a central role in coupling the hydrolysis of ATP to the transfer of proteins into and across the cell membrane, serving as an ATP-driven molecular motor driving the stepwise translocation of polypeptide chains across the membrane. This Chlamydia pneumoniae (Chlamydophila pneumoniae) protein is Protein translocase subunit SecA.